We begin with the raw amino-acid sequence, 512 residues long: 2,3-bisphosphoglycerate-independent phosphoglycerate mutase (512 aa).

Residues D14 and S64 each contribute to the Mn(2+) site. Residue S64 is the Phosphoserine intermediate of the active site. Substrate-binding positions include H125, 155-156 (RD), R187, R193, 259-262 (RADR), and K332. Residues D399, H403, D440, H441, and H459 each contribute to the Mn(2+) site.

Belongs to the BPG-independent phosphoglycerate mutase family. As to quaternary structure, monomer. It depends on Mn(2+) as a cofactor.

The catalysed reaction is (2R)-2-phosphoglycerate = (2R)-3-phosphoglycerate. It functions in the pathway carbohydrate degradation; glycolysis; pyruvate from D-glyceraldehyde 3-phosphate: step 3/5. Functionally, catalyzes the interconversion of 2-phosphoglycerate and 3-phosphoglycerate. In Ruthia magnifica subsp. Calyptogena magnifica, this protein is 2,3-bisphosphoglycerate-independent phosphoglycerate mutase.